The following is a 112-amino-acid chain: Integration host factor subunit alpha (112 aa).

It belongs to the bacterial histone-like protein family. As to quaternary structure, heterodimer of an alpha and a beta chain.

Functionally, this protein is one of the two subunits of integration host factor, a specific DNA-binding protein that functions in genetic recombination as well as in transcriptional and translational control. This is Integration host factor subunit alpha from Rhizobium rhizogenes (strain K84 / ATCC BAA-868) (Agrobacterium radiobacter).